Here is a 298-residue protein sequence, read N- to C-terminus: MNALTLPDIARQTTTADLPLDWVGMQGIALPVQIGGQRVAAEADAGVSLDDPQARGIHMSRLYLALAELEQGELDLSCLRAVLQRFLDSHAGLSRRAYLRLRLAPLLRRPALVSPLSGWKRYPLVLDTRLEGDDFQAEVHLELTYSSTCPCSAALARQLIQERFDQDFAGQPLDHASVLAWLGSSAGIVATPHSQRSSAHLRIGLAEDCIGLPLEELADLGESALGTAVQTAVKRADEQAFALANGQNLMFCEDAVRRLHRALQGYPQASRFSIRVVHAESLHAHDAVAESHWQRGAA.

This sequence belongs to the GTP cyclohydrolase IV family.

It carries out the reaction GTP + H2O = 7,8-dihydroneopterin 3'-triphosphate + formate + H(+). Its pathway is cofactor biosynthesis; 7,8-dihydroneopterin triphosphate biosynthesis; 7,8-dihydroneopterin triphosphate from GTP: step 1/1. In terms of biological role, converts GTP to 7,8-dihydroneopterin triphosphate. The sequence is that of GTP cyclohydrolase FolE2 from Pseudomonas aeruginosa (strain LESB58).